The chain runs to 354 residues: Aspartate carbamoyltransferase catalytic subunit (354 aa).

Carbamoyl phosphate is bound by residues R67 and T68. K95 contacts L-aspartate. Carbamoyl phosphate contacts are provided by R117, H150, and Q153. Residues R190 and R261 each contribute to the L-aspartate site. Residues G302 and P303 each contribute to the carbamoyl phosphate site.

The protein belongs to the aspartate/ornithine carbamoyltransferase superfamily. ATCase family. As to quaternary structure, heterododecamer (2C3:3R2) of six catalytic PyrB chains organized as two trimers (C3), and six regulatory PyrI chains organized as three dimers (R2).

It catalyses the reaction carbamoyl phosphate + L-aspartate = N-carbamoyl-L-aspartate + phosphate + H(+). Its pathway is pyrimidine metabolism; UMP biosynthesis via de novo pathway; (S)-dihydroorotate from bicarbonate: step 2/3. Its function is as follows. Catalyzes the condensation of carbamoyl phosphate and aspartate to form carbamoyl aspartate and inorganic phosphate, the committed step in the de novo pyrimidine nucleotide biosynthesis pathway. In Synechococcus sp. (strain RCC307), this protein is Aspartate carbamoyltransferase catalytic subunit.